The primary structure comprises 695 residues: Tail-specific protease (695 aa).

Residues 1-29 form the signal peptide; sequence MVMKFKMSKNVICYTWLSVCLSSAIPAFA. The region spanning 256–316 is the PDZ domain; it reads IGTTLQSEDD…RLEDLVEKIK (61 aa). Active-site charge relay system residues include Ser-459, Asp-470, and Lys-484.

The protein belongs to the peptidase S41A family.

It localises to the cell inner membrane. The enzyme catalyses The enzyme shows specific recognition of a C-terminal tripeptide, Xaa-Yaa-Zaa, in which Xaa is preferably Ala or Leu, Yaa is preferably Ala or Tyr, and Zaa is preferably Ala, but then cleaves at a variable distance from the C-terminus. A typical cleavage is -Ala-Ala-|-Arg-Ala-Ala-Lys-Glu-Asn-Tyr-Ala-Leu-Ala-Ala.. Functionally, involved in the cleavage of a C-terminal peptide of 11 residues from the precursor form of penicillin-binding protein 3 (PBP3). May be involved in protection of the bacterium from thermal and osmotic stresses. In Haemophilus influenzae (strain ATCC 51907 / DSM 11121 / KW20 / Rd), this protein is Tail-specific protease (prc).